Here is a 257-residue protein sequence, read N- to C-terminus: S-methyl-5'-thioadenosine phosphorylase (257 aa).

Phosphate-binding positions include S10 and 50 to 51 (RH). M180 lines the substrate pocket. T181 serves as a coordination point for phosphate. 204 to 206 (DYD) serves as a coordination point for substrate.

Belongs to the PNP/MTAP phosphorylase family. MTAP subfamily. In terms of assembly, homohexamer. Dimer of a homotrimer.

The enzyme catalyses S-methyl-5'-thioadenosine + phosphate = 5-(methylsulfanyl)-alpha-D-ribose 1-phosphate + adenine. The protein operates within amino-acid biosynthesis; L-methionine biosynthesis via salvage pathway; S-methyl-5-thio-alpha-D-ribose 1-phosphate from S-methyl-5'-thioadenosine (phosphorylase route): step 1/1. Its function is as follows. Catalyzes the reversible phosphorylation of S-methyl-5'-thioadenosine (MTA) to adenine and 5-methylthioribose-1-phosphate. Involved in the breakdown of MTA, a major by-product of polyamine biosynthesis. Responsible for the first step in the methionine salvage pathway after MTA has been generated from S-adenosylmethionine. Has broad substrate specificity with 6-aminopurine nucleosides as preferred substrates. This chain is S-methyl-5'-thioadenosine phosphorylase, found in Pyrococcus horikoshii (strain ATCC 700860 / DSM 12428 / JCM 9974 / NBRC 100139 / OT-3).